A 983-amino-acid polypeptide reads, in one-letter code: Poly [ADP-ribose] polymerase 1 (983 aa).

2 consecutive PARP-type zinc fingers follow at residues 8-91 (WRAE…ESGA) and 114-194 (YGIE…KKAL). Cys20, Cys23, His52, Cys55, Cys126, Cys129, His156, and Cys159 together coordinate Zn(2+). Positions 197–246 (AKTETAEARQTNSRAGTKRKNDSVDNEKSKLAKSSFDMSTSGALQPCSKE) are disordered. The span at 215–226 (RKNDSVDNEKSK) shows a compositional bias: basic and acidic residues. One can recognise a PADR1 zinc-binding domain in the interval 236-375 (TSGALQPCSK…SVKPKRILRP (140 aa)). The zinc ribbon stretch occupies residues 301 to 345 (GPLALCPMCSGHLSFSGGLYRCHGYISEWSKCSHSTLDPDRIKGK). Cys306, Cys309, Cys322, and Cys332 together coordinate Zn(2+). A disordered region spans residues 369-397 (PKRILRPVLSGETSQGQGSKDATDSSRSE). A compositionally biased stretch (polar residues) spans 379 to 388 (GETSQGQGSK). The 91-residue stretch at 394–484 (SRSERLADLK…RKLPFDKYKI (91 aa)) folds into the BRCT domain. The WGR domain occupies 511 to 611 (HCHILEDGNS…TNFQKQPGKF (101 aa)). The region spanning 633 to 751 (SSNLAPSLIE…DIEIASRIVG (119 aa)) is the PARP alpha-helical domain. Residues 758 to 983 (ESLDDKYKKL…LLKVRFKHKR (226 aa)) form the PARP catalytic domain.

The protein belongs to the ARTD/PARP family.

The protein resides in the nucleus. The catalysed reaction is NAD(+) + (ADP-D-ribosyl)n-acceptor = nicotinamide + (ADP-D-ribosyl)n+1-acceptor + H(+).. It catalyses the reaction L-aspartyl-[protein] + NAD(+) = 4-O-(ADP-D-ribosyl)-L-aspartyl-[protein] + nicotinamide. The enzyme catalyses L-glutamyl-[protein] + NAD(+) = 5-O-(ADP-D-ribosyl)-L-glutamyl-[protein] + nicotinamide. In terms of biological role, involved in the base excision repair (BER) pathway, by catalyzing the poly(ADP-ribosyl)ation of a limited number of acceptor proteins involved in chromatin architecture and in DNA metabolism. This modification follows DNA damages and appears as an obligatory step in a detection/signaling pathway leading to the reparation of DNA strand breaks. This Arabidopsis thaliana (Mouse-ear cress) protein is Poly [ADP-ribose] polymerase 1 (PARP1).